The sequence spans 208 residues: Thymidylate kinase (208 aa).

13-20 (GLEGAGKS) is an ATP binding site.

It belongs to the thymidylate kinase family.

It catalyses the reaction dTMP + ATP = dTDP + ADP. Phosphorylation of dTMP to form dTDP in both de novo and salvage pathways of dTTP synthesis. This chain is Thymidylate kinase, found in Shewanella amazonensis (strain ATCC BAA-1098 / SB2B).